Reading from the N-terminus, the 1003-residue chain is Glycine--tRNA ligase (1003 aa).

Residues Met-1–Cys-310 are glycine--tRNA ligase alpha subunit. A glycine--tRNA ligase beta subunit region spans residues Gln-311–Leu-1003.

This sequence belongs to the class-II aminoacyl-tRNA synthetase family.

Its subcellular location is the cytoplasm. It carries out the reaction tRNA(Gly) + glycine + ATP = glycyl-tRNA(Gly) + AMP + diphosphate. In Chlamydia trachomatis serovar L2 (strain ATCC VR-902B / DSM 19102 / 434/Bu), this protein is Glycine--tRNA ligase (glyQS).